The chain runs to 260 residues: Transcription factor BEE 1 (260 aa).

A disordered region spans residues 118-139; it reads ETGSLRRGKRLKKKKEEEDEKE. A bHLH domain is found at 151 to 201; the sequence is QATDSHSLAERVRRGKINERLRCLQDMVPGCYKAMGMATMLDEIINYVQSL.

It is found in the nucleus. Positive regulator of brassinosteroid signaling. The sequence is that of Transcription factor BEE 1 (BEE1) from Arabidopsis thaliana (Mouse-ear cress).